The primary structure comprises 171 residues: bZIP transcription factor 2 (171 aa).

A compositionally biased stretch (low complexity) spans 1–24; sequence MASSSSTYRSSSSSDGGNNNPSDS. The tract at residues 1-54 is disordered; the sequence is MASSSSTYRSSSSSDGGNNNPSDSVVTVDERKRKRMLSNRESARRSRMRKQKHV. The bZIP domain occupies 29–92; that stretch reads DERKRKRMLS…MKIQAENSVL (64 aa). The segment at 31–52 is basic motif; sequence RKRKRMLSNRESARRSRMRKQK. The leucine-zipper stretch occupies residues 57–71; it reads LTAQINQLSNDNRQI.

As to quaternary structure, forms heterodimers with BZIP9, BZIP10, BZIP25 and BZIP63. Component of a ternary complex composed of BZIP2-BZIP63 heterodimer and KIN10.

It is found in the nucleus. Functionally, transcription factor that binds to specific DNA sequences in target gene promoters. BZIP2-BZIP63-KIN10 complex binds to the ETFQO promoter to up-regulate its transcription. This Arabidopsis thaliana (Mouse-ear cress) protein is bZIP transcription factor 2.